Consider the following 570-residue polypeptide: PTS system lactose-specific EIICB component (570 aa).

In terms of domain architecture, PTS EIIC type-3 spans I9–F410. 9 helical membrane passes run G31 to V51, A65 to T85, I104 to P124, A133 to V153, F178 to I198, G223 to H243, M283 to W303, V340 to V360, and I382 to V402. The PTS EIIB type-3 domain occupies Q467–N570. Catalysis depends on C474, which acts as the Phosphocysteine intermediate; for EIIB activity. At C474 the chain carries Phosphocysteine; by EIIA.

The protein resides in the cell membrane. It catalyses the reaction lactose(out) + N(pros)-phospho-L-histidyl-[protein] = lactose 6-phosphate(in) + L-histidyl-[protein]. The phosphoenolpyruvate-dependent sugar phosphotransferase system (sugar PTS), a major carbohydrate active transport system, catalyzes the phosphorylation of incoming sugar substrates concomitantly with their translocation across the cell membrane. The enzyme II LacEF PTS system is involved in lactose transport. This chain is PTS system lactose-specific EIICB component, found in Staphylococcus aureus (strain MSSA476).